The chain runs to 259 residues: Triosephosphate isomerase (259 aa).

Residue 10–12 (NWK) coordinates substrate. The Electrophile role is filled by His-102. Glu-172 serves as the catalytic Proton acceptor. Residues Gly-178, Ser-218, and 239–240 (GG) contribute to the substrate site.

Belongs to the triosephosphate isomerase family. In terms of assembly, homodimer.

The protein localises to the cytoplasm. The enzyme catalyses D-glyceraldehyde 3-phosphate = dihydroxyacetone phosphate. Its pathway is carbohydrate biosynthesis; gluconeogenesis. It participates in carbohydrate degradation; glycolysis; D-glyceraldehyde 3-phosphate from glycerone phosphate: step 1/1. Functionally, involved in the gluconeogenesis. Catalyzes stereospecifically the conversion of dihydroxyacetone phosphate (DHAP) to D-glyceraldehyde-3-phosphate (G3P). The protein is Triosephosphate isomerase of Leifsonia xyli subsp. xyli (strain CTCB07).